Here is a 583-residue protein sequence, read N- to C-terminus: Propane 2-monooxygenase operon transcriptional activator MimR (583 aa).

The 194-residue stretch at 320–513 (LAGRSSSFRR…LRHVLTETLR (194 aa)) folds into the Sigma-54 factor interaction domain. ATP contacts are provided by residues 348–355 (GEKGSGRT) and 395–404 (DADFAVIVAD).

Acts as a transcriptional activator of the mimABCD operon encoding the propane 2-monooxygenase complex. The polypeptide is Propane 2-monooxygenase operon transcriptional activator MimR (Mycolicibacterium goodii (Mycobacterium goodii)).